Consider the following 119-residue polypeptide: MIVGHGIDLQEIEAITKAYERNQRFAERVLTEQELLLFKGISNPKRQMSFLTGRWAAKEAYSKALGTGIGKVNFHDIEILSDDKGAPLITKEPFNGKSFVSISHSGNYAQASVILEEEK.

Mg(2+)-binding residues include aspartate 8 and glutamate 59.

This sequence belongs to the P-Pant transferase superfamily. AcpS family. The cofactor is Mg(2+).

It localises to the cytoplasm. The enzyme catalyses apo-[ACP] + CoA = holo-[ACP] + adenosine 3',5'-bisphosphate + H(+). Transfers the 4'-phosphopantetheine moiety from coenzyme A to a Ser of acyl-carrier-protein. The sequence is that of Holo-[acyl-carrier-protein] synthase from Streptococcus agalactiae serotype Ia (strain ATCC 27591 / A909 / CDC SS700).